The sequence spans 364 residues: Phosphoserine aminotransferase (364 aa).

R41 provides a ligand contact to L-glutamate. Residues 75–76, W100, T155, D175, and Q198 each bind pyridoxal 5'-phosphate; that span reads AS. The residue at position 199 (K199) is an N6-(pyridoxal phosphate)lysine. 239 to 240 contacts pyridoxal 5'-phosphate; sequence NT.

Belongs to the class-V pyridoxal-phosphate-dependent aminotransferase family. SerC subfamily. Homodimer. Pyridoxal 5'-phosphate serves as cofactor.

The protein resides in the cytoplasm. It carries out the reaction O-phospho-L-serine + 2-oxoglutarate = 3-phosphooxypyruvate + L-glutamate. The enzyme catalyses 4-(phosphooxy)-L-threonine + 2-oxoglutarate = (R)-3-hydroxy-2-oxo-4-phosphooxybutanoate + L-glutamate. It participates in amino-acid biosynthesis; L-serine biosynthesis; L-serine from 3-phospho-D-glycerate: step 2/3. Its function is as follows. Catalyzes the reversible conversion of 3-phosphohydroxypyruvate to phosphoserine and of 3-hydroxy-2-oxo-4-phosphonooxybutanoate to phosphohydroxythreonine. The chain is Phosphoserine aminotransferase from Streptococcus thermophilus (strain CNRZ 1066).